The following is an 80-amino-acid chain: MATPTQTPTKAPEEPDPFYYDYNTVQTVGMTLATILFLLGILIVISKKVKCRKADSRSESPTCKSCKSELPSSAPGGGGV.

Topologically, residues 1 to 23 are extracellular; that stretch reads MATPTQTPTKAPEEPDPFYYDYN. Threonine 3, threonine 5, and threonine 9 each carry an O-linked (GlcNAc) threonine glycan. Residues 24–46 form a helical membrane-spanning segment; it reads TVQTVGMTLATILFLLGILIVIS. Topologically, residues 47-80 are cytoplasmic; that stretch reads KKVKCRKADSRSESPTCKSCKSELPSSAPGGGGV. The segment at 54–80 is disordered; sequence ADSRSESPTCKSCKSELPSSAPGGGGV. Serine 73 is modified (phosphoserine).

It belongs to the FXYD family. As to quaternary structure, regulatory subunit of the sodium/potassium-transporting ATPase which is composed of a catalytic alpha subunit, a non-catalytic beta subunit and a FXYD regulatory unit that modulates the enzymatic activity in a tissue- and isoform-specific way by changing affinities of the Na+/K+-ATPase toward Na(+), K(+) or ATP. O-glycosylated; required for stabilization and translocation to the plasma membrane.

Its subcellular location is the cell membrane. Associates with and regulates the activity of the sodium/potassium-transporting ATPase (NKA) which catalyzes the hydrolysis of ATP coupled with the exchange of Na(+) and K(+) ions across the plasma membrane. Reduces the apparent affinity for external K(+), an effect that depends on the presence of external Na(+) and voltage. Increases the apparent affinity for intracellular Na(+). The polypeptide is FXYD domain-containing ion transport regulator 7 (FXYD7) (Homo sapiens (Human)).